A 254-amino-acid chain; its full sequence is Ribose-5-phosphate isomerase A (254 aa).

Substrate-binding positions include 45–48, 105–108, and 118–121; these read TGST, DGAD, and KGGG. Catalysis depends on Glu127, which acts as the Proton acceptor. Residue Lys145 coordinates substrate.

This sequence belongs to the ribose 5-phosphate isomerase family. In terms of assembly, homodimer.

It carries out the reaction aldehydo-D-ribose 5-phosphate = D-ribulose 5-phosphate. It participates in carbohydrate degradation; pentose phosphate pathway; D-ribose 5-phosphate from D-ribulose 5-phosphate (non-oxidative stage): step 1/1. Catalyzes the reversible conversion of ribose-5-phosphate to ribulose 5-phosphate. The chain is Ribose-5-phosphate isomerase A from Treponema pallidum subsp. pallidum (strain SS14).